The following is a 252-amino-acid chain: ATP synthase subunit a (252 aa).

Transmembrane regions (helical) follow at residues 29 to 49 (FTNVSFFIVATVVVSSVFLFI), 87 to 107 (FFPLVFSLFTFILVANFIGLF), 117 to 137 (IMITFSLAMLVIFTVISYGFY), 146 to 166 (LFVPSGVPVLILPLVTMIEVI), 196 to 216 (FIVSMIGIGIMGVGGSILPLI), and 219 to 239 (VAITALEFLVAFLQAYVFTVL).

Belongs to the ATPase A chain family. F-type ATPases have 2 components, CF(1) - the catalytic core - and CF(0) - the membrane proton channel. CF(1) has five subunits: alpha(3), beta(3), gamma(1), delta(1), epsilon(1). CF(0) has three main subunits: a(1), b(2) and c(9-12). The alpha and beta chains form an alternating ring which encloses part of the gamma chain. CF(1) is attached to CF(0) by a central stalk formed by the gamma and epsilon chains, while a peripheral stalk is formed by the delta and b chains.

It localises to the cell inner membrane. Its function is as follows. Key component of the proton channel; it plays a direct role in the translocation of protons across the membrane. The protein is ATP synthase subunit a of Bartonella henselae (strain ATCC 49882 / DSM 28221 / CCUG 30454 / Houston 1) (Rochalimaea henselae).